Here is an 826-residue protein sequence, read N- to C-terminus: Leucine--tRNA ligase (826 aa).

A 'HIGH' region motif is present at residues 42–52 (PYPSGNLHMGH). The 'KMSKS' region motif lies at 581-585 (KMSKS). Position 584 (lysine 584) interacts with ATP.

It belongs to the class-I aminoacyl-tRNA synthetase family.

Its subcellular location is the cytoplasm. The catalysed reaction is tRNA(Leu) + L-leucine + ATP = L-leucyl-tRNA(Leu) + AMP + diphosphate. In Desulforudis audaxviator (strain MP104C), this protein is Leucine--tRNA ligase.